The primary structure comprises 183 residues: Oligoribonuclease (183 aa).

The Exonuclease domain occupies 10-173 (LIWIDLEMTG…ADIRESIAEL (164 aa)). Tyrosine 131 is a catalytic residue.

It belongs to the oligoribonuclease family.

It is found in the cytoplasm. Its function is as follows. 3'-to-5' exoribonuclease specific for small oligoribonucleotides. The sequence is that of Oligoribonuclease from Idiomarina loihiensis (strain ATCC BAA-735 / DSM 15497 / L2-TR).